The following is an 85-amino-acid chain: RNA-binding protein Hfq (85 aa).

The Sm domain maps to 9–68 (DPFLNALRRERIPVSIYLVNGIKLQGQIESFDQFVILLKNTVNQMVYKHAISTVVPARPV). The segment at 66-85 (RPVNHHHASDRPATLEKTEE) is disordered. The span at 72 to 85 (HASDRPATLEKTEE) shows a compositional bias: basic and acidic residues.

Belongs to the Hfq family. As to quaternary structure, homohexamer.

RNA chaperone that binds small regulatory RNA (sRNAs) and mRNAs to facilitate mRNA translational regulation in response to envelope stress, environmental stress and changes in metabolite concentrations. Also binds with high specificity to tRNAs. This Photobacterium profundum (strain SS9) protein is RNA-binding protein Hfq.